The chain runs to 292 residues: Ribosomal protein L11 methyltransferase (292 aa).

Positions 143, 164, 186, and 228 each coordinate S-adenosyl-L-methionine.

It belongs to the methyltransferase superfamily. PrmA family.

It localises to the cytoplasm. The catalysed reaction is L-lysyl-[protein] + 3 S-adenosyl-L-methionine = N(6),N(6),N(6)-trimethyl-L-lysyl-[protein] + 3 S-adenosyl-L-homocysteine + 3 H(+). Methylates ribosomal protein L11. This chain is Ribosomal protein L11 methyltransferase, found in Aeromonas hydrophila subsp. hydrophila (strain ATCC 7966 / DSM 30187 / BCRC 13018 / CCUG 14551 / JCM 1027 / KCTC 2358 / NCIMB 9240 / NCTC 8049).